The chain runs to 72 residues: Translation initiation factor IF-1 (72 aa).

In terms of domain architecture, S1-like spans 1–72 (MAKEEAIEVE…TRGRITYREK (72 aa)).

Belongs to the IF-1 family. Component of the 30S ribosomal translation pre-initiation complex which assembles on the 30S ribosome in the order IF-2 and IF-3, IF-1 and N-formylmethionyl-tRNA(fMet); mRNA recruitment can occur at any time during PIC assembly.

Its subcellular location is the cytoplasm. Its function is as follows. One of the essential components for the initiation of protein synthesis. Stabilizes the binding of IF-2 and IF-3 on the 30S subunit to which N-formylmethionyl-tRNA(fMet) subsequently binds. Helps modulate mRNA selection, yielding the 30S pre-initiation complex (PIC). Upon addition of the 50S ribosomal subunit IF-1, IF-2 and IF-3 are released leaving the mature 70S translation initiation complex. The protein is Translation initiation factor IF-1 of Syntrophotalea carbinolica (strain DSM 2380 / NBRC 103641 / GraBd1) (Pelobacter carbinolicus).